A 315-amino-acid polypeptide reads, in one-letter code: PIH1 domain-containing protein 2 (315 aa).

It belongs to the PIH1 family.

This chain is PIH1 domain-containing protein 2 (PIH1D2), found in Homo sapiens (Human).